The following is a 209-amino-acid chain: Large ribosomal subunit protein uL3 (209 aa).

Position 150 is an N5-methylglutamine (glutamine 150).

The protein belongs to the universal ribosomal protein uL3 family. Part of the 50S ribosomal subunit. Forms a cluster with proteins L14 and L19. In terms of processing, methylated by PrmB.

Functionally, one of the primary rRNA binding proteins, it binds directly near the 3'-end of the 23S rRNA, where it nucleates assembly of the 50S subunit. The chain is Large ribosomal subunit protein uL3 from Citrobacter koseri (strain ATCC BAA-895 / CDC 4225-83 / SGSC4696).